A 172-amino-acid chain; its full sequence is 3-hydroxydecanoyl-[acyl-carrier-protein] dehydratase (172 aa).

The active site involves H71.

This sequence belongs to the thioester dehydratase family. FabA subfamily. As to quaternary structure, homodimer.

Its subcellular location is the cytoplasm. The catalysed reaction is a (3R)-hydroxyacyl-[ACP] = a (2E)-enoyl-[ACP] + H2O. It catalyses the reaction (3R)-hydroxydecanoyl-[ACP] = (2E)-decenoyl-[ACP] + H2O. The enzyme catalyses (2E)-decenoyl-[ACP] = (3Z)-decenoyl-[ACP]. It functions in the pathway lipid metabolism; fatty acid biosynthesis. In terms of biological role, necessary for the introduction of cis unsaturation into fatty acids. Catalyzes the dehydration of (3R)-3-hydroxydecanoyl-ACP to E-(2)-decenoyl-ACP and then its isomerization to Z-(3)-decenoyl-ACP. Can catalyze the dehydratase reaction for beta-hydroxyacyl-ACPs with saturated chain lengths up to 16:0, being most active on intermediate chain length. This chain is 3-hydroxydecanoyl-[acyl-carrier-protein] dehydratase, found in Klebsiella pneumoniae subsp. pneumoniae (strain ATCC 700721 / MGH 78578).